The chain runs to 205 residues: Small ribosomal subunit protein uS4 (205 aa).

The segment at 1-46 is disordered; that stretch reads MSKRHSAKYKIDRRMGENLWGRPKSPVNSRSYGPGQHGQRRKSKVS. Residues 94-154 enclose the S4 RNA-binding domain; that stretch reads SRLDAIVYRA…EKSRNMALVL (61 aa).

Belongs to the universal ribosomal protein uS4 family. As to quaternary structure, part of the 30S ribosomal subunit. Contacts protein S5. The interaction surface between S4 and S5 is involved in control of translational fidelity.

Functionally, one of the primary rRNA binding proteins, it binds directly to 16S rRNA where it nucleates assembly of the body of the 30S subunit. With S5 and S12 plays an important role in translational accuracy. In Caulobacter vibrioides (strain ATCC 19089 / CIP 103742 / CB 15) (Caulobacter crescentus), this protein is Small ribosomal subunit protein uS4.